Reading from the N-terminus, the 311-residue chain is MTRVKAAIIGSGNIGTDLMMKMIKYPQNMELAIVVGIDEKSEGLAMAREHGIATTHEGLEGLRRHPLYKEIGIAFDATSAYAHKVHDEALRADGIQVVDLTPAAIGPFTVPPVNMSQHLDQPNVNMVTCGGQATIPMVAAVARVSDKVHYAEIVASVSSRSAGPGTRANIDEFTRTTARAIEVVGGATRGKAIIILNPAEPPMIMRDTVFTLSEGADEDQIRRSVADMVAEVQKYVPGYRLKQEVQFERFGDNNKLKIPGQGEFTGIKSMIMLEVEGAGDYLPSYSGNLDIMTAAAKATGELLAARRMAAA.

Serine 11–isoleucine 14 contacts NAD(+). Cysteine 129 acts as the Acyl-thioester intermediate in catalysis. Residues serine 161–asparagine 169 and asparagine 288 contribute to the NAD(+) site.

Belongs to the acetaldehyde dehydrogenase family.

The catalysed reaction is acetaldehyde + NAD(+) + CoA = acetyl-CoA + NADH + H(+). This chain is Acetaldehyde dehydrogenase 1, found in Novosphingobium aromaticivorans (strain ATCC 700278 / DSM 12444 / CCUG 56034 / CIP 105152 / NBRC 16084 / F199).